The chain runs to 124 residues: Fluoride-specific ion channel FluC (124 aa).

4 helical membrane passes run 4–24, 35–55, 62–82, and 95–115; these read LLFV…MSII, FGTL…YALG, PELK…FSTF, and WFKS…MVYL. Residues G74 and T77 each contribute to the Na(+) site.

Belongs to the fluoride channel Fluc/FEX (TC 1.A.43) family.

It localises to the cell inner membrane. It carries out the reaction fluoride(in) = fluoride(out). Na(+) is not transported, but it plays an essential structural role and its presence is essential for fluoride channel function. In terms of biological role, fluoride-specific ion channel. Important for reducing fluoride concentration in the cell, thus reducing its toxicity. This Shewanella denitrificans (strain OS217 / ATCC BAA-1090 / DSM 15013) protein is Fluoride-specific ion channel FluC.